Here is a 196-residue protein sequence, read N- to C-terminus: MADS-box protein FLOWERING LOCUS C (196 aa).

The region spanning 1-61 is the MADS-box domain; the sequence is MGRKKLEIKR…GKLYSFSSGD (61 aa). Positions 8 to 15 match the Nuclear localization signal motif; sequence IKRIENKS. In terms of domain architecture, K-box spans 80-170; sequence ALDHQSKALN…ASQMENNHHV (91 aa).

In terms of tissue distribution, high expression in the vegetative apex and in root tissue and lower expression in leaves and stems. Not detected in young tissues of the inflorescence. Before fertilization, expressed in ovules, but not in pollen or stamens, of non-vernalized plants. After vernalization, not detected in ovules.

The protein localises to the nucleus. Its function is as follows. Putative transcription factor that seems to play a central role in the regulation of flowering time in the late-flowering phenotype by interacting with 'FRIGIDA', the autonomous and the vernalization flowering pathways. Inhibits flowering by repressing 'SUPPRESSOR OF OVEREXPRESSION OF CONSTANS 1'. At elevated temperatures (e.g. 29 degrees Celsius), maintained at high levels in a JMJ30/JMJ32-dependent manner to prevent extreme precocious flowering. The sequence is that of MADS-box protein FLOWERING LOCUS C from Arabidopsis thaliana (Mouse-ear cress).